The chain runs to 140 residues: Large ribosomal subunit protein bL17 (140 aa).

This sequence belongs to the bacterial ribosomal protein bL17 family. In terms of assembly, part of the 50S ribosomal subunit. Contacts protein L32.

The chain is Large ribosomal subunit protein bL17 from Rhizobium etli (strain CIAT 652).